Reading from the N-terminus, the 172-residue chain is 3-hydroxydecanoyl-[acyl-carrier-protein] dehydratase (172 aa).

His71 is a catalytic residue.

The protein belongs to the thioester dehydratase family. FabA subfamily. In terms of assembly, homodimer.

The protein resides in the cytoplasm. It catalyses the reaction a (3R)-hydroxyacyl-[ACP] = a (2E)-enoyl-[ACP] + H2O. It carries out the reaction (3R)-hydroxydecanoyl-[ACP] = (2E)-decenoyl-[ACP] + H2O. The catalysed reaction is (2E)-decenoyl-[ACP] = (3Z)-decenoyl-[ACP]. The protein operates within lipid metabolism; fatty acid biosynthesis. Necessary for the introduction of cis unsaturation into fatty acids. Catalyzes the dehydration of (3R)-3-hydroxydecanoyl-ACP to E-(2)-decenoyl-ACP and then its isomerization to Z-(3)-decenoyl-ACP. Can catalyze the dehydratase reaction for beta-hydroxyacyl-ACPs with saturated chain lengths up to 16:0, being most active on intermediate chain length. This Klebsiella pneumoniae (strain 342) protein is 3-hydroxydecanoyl-[acyl-carrier-protein] dehydratase.